A 387-amino-acid chain; its full sequence is Cysteine desulfurase IscS (387 aa).

Residues 73-74 (AT), Asn-155, Gln-183, and 203-205 (SAH) contribute to the pyridoxal 5'-phosphate site. Residue Lys-206 is modified to N6-(pyridoxal phosphate)lysine. Thr-241 serves as a coordination point for pyridoxal 5'-phosphate. Cys-328 functions as the Cysteine persulfide intermediate in the catalytic mechanism. Residue Cys-328 participates in [2Fe-2S] cluster binding.

Belongs to the class-V pyridoxal-phosphate-dependent aminotransferase family. NifS/IscS subfamily. As to quaternary structure, homodimer. Forms a heterotetramer with IscU, interacts with other sulfur acceptors. It depends on pyridoxal 5'-phosphate as a cofactor.

It localises to the cytoplasm. It catalyses the reaction (sulfur carrier)-H + L-cysteine = (sulfur carrier)-SH + L-alanine. The protein operates within cofactor biosynthesis; iron-sulfur cluster biosynthesis. Its function is as follows. Master enzyme that delivers sulfur to a number of partners involved in Fe-S cluster assembly, tRNA modification or cofactor biosynthesis. Catalyzes the removal of elemental sulfur atoms from cysteine to produce alanine. Functions as a sulfur delivery protein for Fe-S cluster synthesis onto IscU, an Fe-S scaffold assembly protein, as well as other S acceptor proteins. The polypeptide is Cysteine desulfurase IscS (Helicobacter pylori (strain ATCC 700392 / 26695) (Campylobacter pylori)).